The chain runs to 78 residues: MASMIEVRDLLALQGRMEAKQLSLSLHTPQPLIDAMLERMEAMGRAQRIQEDADGCLTGSCKSCPEGKACLKEWWALR.

The iron-sulfur cluster site is built by Cys56, Cys61, Cys64, and Cys70.

It belongs to the FeoC family.

May function as a transcriptional regulator that controls feoABC expression. The chain is Probable [Fe-S]-dependent transcriptional repressor from Enterobacter sp. (strain 638).